The following is a 117-amino-acid chain: Protein Wnt-6 (117 aa).

Serine 1 carries the O-palmitoleoyl serine; by PORCN lipid modification. A disulfide bridge connects residues cysteine 83 and cysteine 98. A glycan (N-linked (GlcNAc...) asparagine) is linked at asparagine 84.

Belongs to the Wnt family. Post-translationally, palmitoleoylation is required for efficient binding to frizzled receptors. Depalmitoleoylation leads to Wnt signaling pathway inhibition.

The protein localises to the secreted. Its subcellular location is the extracellular space. The protein resides in the extracellular matrix. Functionally, ligand for members of the frizzled family of seven transmembrane receptors. Probable developmental protein. May be a signaling molecule which affects the development of discrete regions of tissues. Is likely to signal over only few cell diameters. This chain is Protein Wnt-6 (WNT-6), found in Strongylocentrotus purpuratus (Purple sea urchin).